A 93-amino-acid chain; its full sequence is RNA-binding protein Hfq (93 aa).

The Sm domain maps to 11–71; the sequence is DVFLNHVRKS…ISTVMPGAPI (61 aa).

Belongs to the Hfq family. As to quaternary structure, homohexamer.

RNA chaperone that binds small regulatory RNA (sRNAs) and mRNAs to facilitate mRNA translational regulation in response to envelope stress, environmental stress and changes in metabolite concentrations. Also binds with high specificity to tRNAs. The chain is RNA-binding protein Hfq from Granulibacter bethesdensis (strain ATCC BAA-1260 / CGDNIH1).